Consider the following 210-residue polypeptide: Stress-response A/B barrel domain-containing protein DABB1 (210 aa).

Stress-response A/B barrel domains lie at 5-100 (VEHV…AVDW) and 116-204 (IGKI…VVEF).

Homodimer.

The protein localises to the cytoplasm. Its subcellular location is the cytosol. In terms of biological role, involved in defense against fungal pathogens. Possesses antifungal activity against diverse pathogenic fungi. The protein is Stress-response A/B barrel domain-containing protein DABB1 of Arabidopsis thaliana (Mouse-ear cress).